Reading from the N-terminus, the 134-residue chain is Putative nickel-responsive regulator (134 aa).

Residues H78, H89, H91, and C97 each contribute to the Ni(2+) site.

This sequence belongs to the transcriptional regulatory CopG/NikR family. Requires Ni(2+) as cofactor.

Transcriptional regulator. The protein is Putative nickel-responsive regulator of Chlorobium phaeobacteroides (strain DSM 266 / SMG 266 / 2430).